The sequence spans 284 residues: Chaperone protein dnaJ 6 (284 aa).

3 disordered regions span residues 1-30, 196-221, and 252-284; these read MGRK…ETSL, NKIS…AKDS, and GGDA…SRGK. The Nuclear localization signal signature appears at 3-6; it reads RKKK. One can recognise a J domain in the interval 29–94; it reads SLYEVLGVER…EKRAVYDQTG (66 aa). The Nuclear localization signal motif lies at 209 to 215; sequence RKRKKKK. Positions 255–265 are enriched in acidic residues; that stretch reads AEAEPTEEEFE. Positions 266 to 275 are enriched in basic and acidic residues; the sequence is AAQRRIESKR.

This sequence belongs to the DnaJ family. C/III subfamily. In terms of tissue distribution, highly expressed in leaves, flowers and siliques, and to lower extent in roots.

The protein localises to the nucleus. Functionally, plays a continuous role in plant development probably in the structural organization of compartments. The sequence is that of Chaperone protein dnaJ 6 (ATJ6) from Arabidopsis thaliana (Mouse-ear cress).